We begin with the raw amino-acid sequence, 250 residues long: Probable transcriptional regulatory protein Ctha_1786 (250 aa).

This sequence belongs to the TACO1 family.

The protein resides in the cytoplasm. The polypeptide is Probable transcriptional regulatory protein Ctha_1786 (Chloroherpeton thalassium (strain ATCC 35110 / GB-78)).